Reading from the N-terminus, the 559-residue chain is Amino-acid acetyltransferase, mitochondrial (559 aa).

Positions 162–188 are disordered; the sequence is RLGPKPGSEDPTSELDFTPPETHTLPP. One can recognise an N-acetyltransferase domain in the interval 362 to 538; that stretch reads LPVQVFHSVS…GSAGLSYVED (177 aa).

Belongs to the acetyltransferase family.

The protein resides in the mitochondrion. The catalysed reaction is L-glutamate + acetyl-CoA = N-acetyl-L-glutamate + CoA + H(+). It functions in the pathway amino-acid biosynthesis; L-arginine biosynthesis; N(2)-acetyl-L-ornithine from L-glutamate: step 1/4. Its function is as follows. N-acetylglutamate synthase involved in arginine biosynthesis. In Laccaria bicolor (strain S238N-H82 / ATCC MYA-4686) (Bicoloured deceiver), this protein is Amino-acid acetyltransferase, mitochondrial (ARG2).